We begin with the raw amino-acid sequence, 273 residues long: Cell division protein FtsQ (273 aa).

The Cytoplasmic portion of the chain corresponds to 1-20 (MPPRKAHTTRRTPAKKSGVR). A helical membrane pass occupies residues 21–43 (RRLLRLLVTGVPVLALCGVAWLW). The Periplasmic portion of the chain corresponds to 44–273 (LESVRLTRIE…STQKSAMGHE (230 aa)). The POTRA domain maps to 47–115 (VRLTRIEIVG…GTLRIAVEER (69 aa)).

Belongs to the FtsQ/DivIB family. FtsQ subfamily.

Its subcellular location is the cell inner membrane. In terms of biological role, essential cell division protein. In Rhodothermus marinus (strain ATCC 43812 / DSM 4252 / R-10) (Rhodothermus obamensis), this protein is Cell division protein FtsQ.